The primary structure comprises 36 residues: Potassium channel toxin alpha-KTx 1.9 (36 aa).

The protein belongs to the short scorpion toxin superfamily. Potassium channel inhibitor family. Alpha-KTx 01 subfamily. In terms of tissue distribution, expressed by the venom gland.

It localises to the secreted. Potent selective inhibitor of Kv1/KCNA voltage-gated potassium channels. This Centruroides limbatus (Bark scorpion) protein is Potassium channel toxin alpha-KTx 1.9.